The sequence spans 360 residues: UDP-N-acetylglucosamine--N-acetylmuramyl-(pentapeptide) pyrophosphoryl-undecaprenol N-acetylglucosamine transferase (360 aa).

UDP-N-acetyl-alpha-D-glucosamine is bound by residues 15–17 (TGG), asparagine 128, arginine 164, serine 192, isoleucine 247, and glutamine 292.

Belongs to the glycosyltransferase 28 family. MurG subfamily.

The protein localises to the cell inner membrane. It carries out the reaction di-trans,octa-cis-undecaprenyl diphospho-N-acetyl-alpha-D-muramoyl-L-alanyl-D-glutamyl-meso-2,6-diaminopimeloyl-D-alanyl-D-alanine + UDP-N-acetyl-alpha-D-glucosamine = di-trans,octa-cis-undecaprenyl diphospho-[N-acetyl-alpha-D-glucosaminyl-(1-&gt;4)]-N-acetyl-alpha-D-muramoyl-L-alanyl-D-glutamyl-meso-2,6-diaminopimeloyl-D-alanyl-D-alanine + UDP + H(+). Its pathway is cell wall biogenesis; peptidoglycan biosynthesis. Functionally, cell wall formation. Catalyzes the transfer of a GlcNAc subunit on undecaprenyl-pyrophosphoryl-MurNAc-pentapeptide (lipid intermediate I) to form undecaprenyl-pyrophosphoryl-MurNAc-(pentapeptide)GlcNAc (lipid intermediate II). This chain is UDP-N-acetylglucosamine--N-acetylmuramyl-(pentapeptide) pyrophosphoryl-undecaprenol N-acetylglucosamine transferase, found in Blochmanniella floridana.